The following is a 210-amino-acid chain: Large ribosomal subunit protein uL3 (210 aa).

The segment at 119-151 is disordered; sequence FQGAIKRHGQSRGPMSHGSRYHRRPGSMGPVAP.

This sequence belongs to the universal ribosomal protein uL3 family. Part of the 50S ribosomal subunit. Forms a cluster with proteins L14 and L19.

In terms of biological role, one of the primary rRNA binding proteins, it binds directly near the 3'-end of the 23S rRNA, where it nucleates assembly of the 50S subunit. This is Large ribosomal subunit protein uL3 from Bacillus cytotoxicus (strain DSM 22905 / CIP 110041 / 391-98 / NVH 391-98).